A 1483-amino-acid polypeptide reads, in one-letter code: ABC multidrug transporter atrA (1483 aa).

Residues 1 to 19 (MASHKKSEDPLVVKDRQEQ) are compositionally biased toward basic and acidic residues. The disordered stretch occupies residues 1–92 (MASHKKSEDP…NDPAVDPQGP (92 aa)). Residue Asn-32 is glycosylated (N-linked (GlcNAc...) asparagine). Polar residues predominate over residues 71 to 82 (PTRTSTLATISE). Residues Asn-123 and Asn-322 are each glycosylated (N-linked (GlcNAc...) asparagine). Positions 147-398 (FRIGEMMKNR…FERQGWECPQ (252 aa)) constitute an ABC transporter 1 domain. 5 helical membrane passes run 512-532 (TVST…VFYG), 539-559 (GFTA…LIAM), 595-615 (IPVK…LAGL), 620-640 (GQFF…SAVF), and 654-674 (MGLA…VLPV). N-linked (GlcNAc...) asparagine glycosylation occurs at Asn-718. A helical membrane pass occupies residues 759 to 779 (FGILIAFLVGFMMIYFIATEL). Asn-780 carries an N-linked (GlcNAc...) asparagine glycan. The 244-residue stretch at 840 to 1083 (FTWRDVCYDI…LLNYFESNGA (244 aa)) folds into the ABC transporter 2 domain. 876–883 (GVSGAGKT) is an ATP binding site. 2 N-linked (GlcNAc...) asparagine glycosylation sites follow: Asn-947 and Asn-1146. 5 helical membrane-spanning segments follow: residues 1179 to 1199 (YIAS…FSFF), 1215 to 1235 (LFML…LFVT), 1254 to 1274 (AFLI…GILT), 1293 to 1313 (LVLL…HMAI), and 1320 to 1340 (ETAS…CGVM). Asn-1413 carries an N-linked (GlcNAc...) asparagine glycan. The chain crosses the membrane as a helical span at residues 1444-1464 (FGLMWVYIVFNIFLATMLYYT). An N-linked (GlcNAc...) asparagine glycan is attached at Asn-1471.

The protein belongs to the ABC transporter superfamily. ABCG family. PDR (TC 3.A.1.205) subfamily.

The protein resides in the cell membrane. It catalyses the reaction (R)-miconazole(in) + ATP + H2O = (R)-miconazole(out) + ADP + phosphate + H(+). In terms of biological role, pleiotropic ABC efflux transporter involved in the basal level of azole susceptibility. Confers resistance to miconazole and clotrimazole. The polypeptide is ABC multidrug transporter atrA (Aspergillus oryzae (strain ATCC 42149 / RIB 40) (Yellow koji mold)).